We begin with the raw amino-acid sequence, 302 residues long: Methionyl-tRNA formyltransferase (302 aa).

108–111 (SLLP) contacts (6S)-5,6,7,8-tetrahydrofolate. Residues 276–288 (REGKRPMEPEEFL) are compositionally biased toward basic and acidic residues. The interval 276 to 302 (REGKRPMEPEEFLRGFPLPEGSRAHTA) is disordered.

This sequence belongs to the Fmt family.

The enzyme catalyses L-methionyl-tRNA(fMet) + (6R)-10-formyltetrahydrofolate = N-formyl-L-methionyl-tRNA(fMet) + (6S)-5,6,7,8-tetrahydrofolate + H(+). Attaches a formyl group to the free amino group of methionyl-tRNA(fMet). The formyl group appears to play a dual role in the initiator identity of N-formylmethionyl-tRNA by promoting its recognition by IF2 and preventing the misappropriation of this tRNA by the elongation apparatus. The sequence is that of Methionyl-tRNA formyltransferase from Cereibacter sphaeroides (strain KD131 / KCTC 12085) (Rhodobacter sphaeroides).